A 407-amino-acid polypeptide reads, in one-letter code: MNQNADFCINNVNIATMRSTKQTENDPYGIRENACIFIKNGLIDAIEPAKRRLSSTIKTFDAQRKWLLPGLIDCHTHLVFAGNRALEFEMRQQGMSYAQIAQRGGGIRSTVNATRLASYEGLLNSAIGRAARLVEEGVTTIEIKSGYGLDLATELRMLQVAKDIESYLLVNIQPTYLGAHSVPFEFHEDPDAYVDFVCEHVMPEVIKQGIATSVDVFCESIAFSPVQCEKVFRSAKHYGLNIKAHVEQLSDLKGARLAAKFNALSVDHIEYLPPDDVPAIAKSNTVAVLLPGAFYHLRETQRPPLTALRRHHVPIALASDLNPGSSPVASLLTIMNMGCILFGMTPAEALSGVTRNAAQALGLAQKGQISSGFDADMCLWDIQHPNELSYGINQIRPTRVWVNGKER.

Fe(3+) is bound by residues His-75 and His-77. Zn(2+) is bound by residues His-75 and His-77. The 4-imidazolone-5-propanoate site is built by Arg-84, Tyr-147, and His-180. Tyr-147 is a binding site for N-formimidoyl-L-glutamate. His-245 is a Fe(3+) binding site. His-245 lines the Zn(2+) pocket. Gln-248 is a 4-imidazolone-5-propanoate binding site. Position 320 (Asp-320) interacts with Fe(3+). Asp-320 is a Zn(2+) binding site. The N-formimidoyl-L-glutamate site is built by Asn-322 and Gly-324. Ser-325 lines the 4-imidazolone-5-propanoate pocket.

This sequence belongs to the metallo-dependent hydrolases superfamily. HutI family. It depends on Zn(2+) as a cofactor. Requires Fe(3+) as cofactor.

The protein localises to the cytoplasm. It catalyses the reaction 4-imidazolone-5-propanoate + H2O = N-formimidoyl-L-glutamate. It functions in the pathway amino-acid degradation; L-histidine degradation into L-glutamate; N-formimidoyl-L-glutamate from L-histidine: step 3/3. Catalyzes the hydrolytic cleavage of the carbon-nitrogen bond in imidazolone-5-propanoate to yield N-formimidoyl-L-glutamate. It is the third step in the universal histidine degradation pathway. This is Imidazolonepropionase from Pseudoalteromonas atlantica (strain T6c / ATCC BAA-1087).